Here is a 51-residue protein sequence, read N- to C-terminus: Sperm protamine P1 (51 aa).

The protein belongs to the protamine P1 family. In terms of tissue distribution, testis.

Its subcellular location is the nucleus. The protein localises to the chromosome. Functionally, protamines substitute for histones in the chromatin of sperm during the haploid phase of spermatogenesis. They compact sperm DNA into a highly condensed, stable and inactive complex. The protein is Sperm protamine P1 (PRM1) of Trachypithecus cristatus (Silvered leaf-monkey).